The primary structure comprises 313 residues: Vacuolar membrane protein ZYRO0A01628g (313 aa).

The segment covering Ser22–Ala37 has biased composition (low complexity). The segment at Ser22 to Pro48 is disordered. The helical transmembrane segment at Gly59 to Trp79 threads the bilayer. Over residues Thr221–Leu234 the composition is skewed to low complexity. The disordered stretch occupies residues Thr221 to Thr313. The segment covering Asp235 to Pro247 has biased composition (basic and acidic residues). Over residues Lys248–Asn257 the composition is skewed to basic residues. Residues Asn285–Leu301 show a composition bias toward polar residues.

It belongs to the PRM5 family.

The protein localises to the vacuole membrane. The protein is Vacuolar membrane protein ZYRO0A01628g of Zygosaccharomyces rouxii (strain ATCC 2623 / CBS 732 / NBRC 1130 / NCYC 568 / NRRL Y-229).